The sequence spans 835 residues: Protein translocase subunit SecA (835 aa).

ATP contacts are provided by residues Gln-85, 103 to 107 (GEGKT), and Asp-492. Zn(2+)-binding residues include Cys-819, Cys-821, Cys-830, and Cys-831.

This sequence belongs to the SecA family. As to quaternary structure, monomer and homodimer. Part of the essential Sec protein translocation apparatus which comprises SecA, SecYEG and auxiliary proteins SecDF. Other proteins may also be involved. Requires Zn(2+) as cofactor.

Its subcellular location is the cell membrane. The protein resides in the cytoplasm. It catalyses the reaction ATP + H2O + cellular proteinSide 1 = ADP + phosphate + cellular proteinSide 2.. Its function is as follows. Part of the Sec protein translocase complex. Interacts with the SecYEG preprotein conducting channel. Has a central role in coupling the hydrolysis of ATP to the transfer of proteins into and across the cell membrane, serving as an ATP-driven molecular motor driving the stepwise translocation of polypeptide chains across the membrane. The protein is Protein translocase subunit SecA of Clostridium botulinum (strain Okra / Type B1).